The following is a 313-amino-acid chain: D-alanine--D-alanine ligase (313 aa).

In terms of domain architecture, ATP-grasp spans 108-308 (KLVWQQTGVP…YSELVVKVLS (201 aa)). Residue 138-193 (VAKLGLPLFVKPASEGSSVAVLKVKTADALPAALSEAATHDKIVIVEKSIEGGGEY) coordinates ATP. Residues aspartate 262, glutamate 275, and asparagine 277 each coordinate Mg(2+).

The protein belongs to the D-alanine--D-alanine ligase family. Requires Mg(2+) as cofactor. Mn(2+) serves as cofactor.

The protein resides in the cytoplasm. It catalyses the reaction 2 D-alanine + ATP = D-alanyl-D-alanine + ADP + phosphate + H(+). It functions in the pathway cell wall biogenesis; peptidoglycan biosynthesis. Cell wall formation. The protein is D-alanine--D-alanine ligase of Burkholderia ambifaria (strain MC40-6).